Consider the following 275-residue polypeptide: MFTKLIIAASLAASVAAHATFQELWINGVDQGSSCVRLPQSNSPVTSVSTPDLACNASPHPSDGICQVMPGDEVTVEMHQQPNDRSCATEAIGGDHYGPVLVYMAKVDDATTAVGSSAQWFKVAEIGLPSSNPDYWGTEVLNDNCGHYTFKVPSDIAPGNYLIRAEVIALHVASSIGGAQFYMSCYQVNVGGSGSANPPTVSIPGAYSATDPGILINIYEPLSTYTIPGPTPYATTSPAVANTPYPTTATWNTALQPSTVPTAVPTPGTPGIGKA.

Residues 1 to 17 form the signal peptide; it reads MFTKLIIAASLAASVAA. Cu(2+) is bound at residue H18. T20 bears the Phosphothreonine mark. A phosphoserine mark is found at S43 and S49. T50 is modified (phosphothreonine). S58 bears the Phosphoserine mark. C66 and C185 form a disulfide bridge. Residue H96 coordinates Cu(2+). The residue at position 130 (S130) is a Phosphoserine. Residues H171 and Q180 each contribute to the O2 site. Position 182 (Y182) interacts with Cu(2+). The tract at residues 236–265 is X282 extension; sequence TSPAVANTPYPTTATWNTALQPSTVPTAVP. The 9res motif motif lies at 268 to 275; the sequence is GTPGIGKA.

It belongs to the polysaccharide monooxygenase AA9 family. Requires Cu(2+) as cofactor.

The protein localises to the secreted. The enzyme catalyses [(1-&gt;4)-beta-D-glucosyl]n+m + reduced acceptor + O2 = 4-dehydro-beta-D-glucosyl-[(1-&gt;4)-beta-D-glucosyl]n-1 + [(1-&gt;4)-beta-D-glucosyl]m + acceptor + H2O.. Its function is as follows. Lytic polysaccharide monooxygenase (LPMO) that depolymerizes crystalline and amorphous polysaccharides via the oxidation of scissile alpha- or beta-(1-4)-glycosidic bonds, yielding C1 oxidation products. Catalysis by LPMOs requires the reduction of the active-site copper from Cu(II) to Cu(I) by a reducing agent and H(2)O(2) or O(2) as a cosubstrate. Shows only weak binding properties to cellulose, and low cellulolytic oxidative activity which questions the involvement of X282 extension-containing AA9 proteins in the degradation of plant cell wall and opens new avenues as to the divergence of function of some AA9 members. This chain is AA9 family lytic polysaccharide monooxygenase AA9-X282, found in Trametes coccinea (strain BRFM310) (Pycnoporus coccineus).